The following is a 404-amino-acid chain: Cysteine desulfurase IscS (404 aa).

Residues 75–76 (AT), Asn-155, Gln-183, and 203–205 (SAH) each bind pyridoxal 5'-phosphate. Residue Lys-206 is modified to N6-(pyridoxal phosphate)lysine. Pyridoxal 5'-phosphate is bound at residue Thr-243. The active-site Cysteine persulfide intermediate is the Cys-328. Cys-328 serves as a coordination point for [2Fe-2S] cluster.

Belongs to the class-V pyridoxal-phosphate-dependent aminotransferase family. NifS/IscS subfamily. In terms of assembly, homodimer. Forms a heterotetramer with IscU, interacts with other sulfur acceptors. Pyridoxal 5'-phosphate serves as cofactor.

The protein resides in the cytoplasm. The catalysed reaction is (sulfur carrier)-H + L-cysteine = (sulfur carrier)-SH + L-alanine. It functions in the pathway cofactor biosynthesis; iron-sulfur cluster biosynthesis. Its function is as follows. Master enzyme that delivers sulfur to a number of partners involved in Fe-S cluster assembly, tRNA modification or cofactor biosynthesis. Catalyzes the removal of elemental sulfur atoms from cysteine to produce alanine. Functions as a sulfur delivery protein for Fe-S cluster synthesis onto IscU, an Fe-S scaffold assembly protein, as well as other S acceptor proteins. This chain is Cysteine desulfurase IscS, found in Ectopseudomonas mendocina (strain ymp) (Pseudomonas mendocina).